The sequence spans 1445 residues: DNA-directed RNA polymerase subunit beta'' (1445 aa).

C220, C293, C300, and C303 together coordinate Zn(2+).

It belongs to the RNA polymerase beta' chain family. RpoC2 subfamily. In plastids the minimal PEP RNA polymerase catalytic core is composed of four subunits: alpha, beta, beta', and beta''. When a (nuclear-encoded) sigma factor is associated with the core the holoenzyme is formed, which can initiate transcription. Zn(2+) is required as a cofactor.

The protein resides in the plastid. It localises to the chloroplast. It carries out the reaction RNA(n) + a ribonucleoside 5'-triphosphate = RNA(n+1) + diphosphate. DNA-dependent RNA polymerase catalyzes the transcription of DNA into RNA using the four ribonucleoside triphosphates as substrates. This is DNA-directed RNA polymerase subunit beta'' from Anthoceros angustus (Hornwort).